We begin with the raw amino-acid sequence, 294 residues long: 4-hydroxy-tetrahydrodipicolinate synthase (294 aa).

Residue Thr-45 coordinates pyruvate. Tyr-133 (proton donor/acceptor) is an active-site residue. Lys-162 functions as the Schiff-base intermediate with substrate in the catalytic mechanism. Ile-204 is a binding site for pyruvate.

Belongs to the DapA family. In terms of assembly, homotetramer; dimer of dimers.

The protein localises to the cytoplasm. The enzyme catalyses L-aspartate 4-semialdehyde + pyruvate = (2S,4S)-4-hydroxy-2,3,4,5-tetrahydrodipicolinate + H2O + H(+). Its pathway is amino-acid biosynthesis; L-lysine biosynthesis via DAP pathway; (S)-tetrahydrodipicolinate from L-aspartate: step 3/4. In terms of biological role, catalyzes the condensation of (S)-aspartate-beta-semialdehyde [(S)-ASA] and pyruvate to 4-hydroxy-tetrahydrodipicolinate (HTPA). The sequence is that of 4-hydroxy-tetrahydrodipicolinate synthase from Bartonella quintana (strain Toulouse) (Rochalimaea quintana).